The primary structure comprises 282 residues: Biotin synthase (282 aa).

The Radical SAM core domain maps to 1 to 228 (MQEIFLCSIS…NARLMVAGGR (228 aa)). The [4Fe-4S] cluster site is built by cysteine 17, cysteine 21, and cysteine 24. Cysteine 61, cysteine 96, cysteine 154, and arginine 221 together coordinate [2Fe-2S] cluster.

The protein belongs to the radical SAM superfamily. Biotin synthase family. Homodimer. It depends on [4Fe-4S] cluster as a cofactor. Requires [2Fe-2S] cluster as cofactor.

The enzyme catalyses (4R,5S)-dethiobiotin + (sulfur carrier)-SH + 2 reduced [2Fe-2S]-[ferredoxin] + 2 S-adenosyl-L-methionine = (sulfur carrier)-H + biotin + 2 5'-deoxyadenosine + 2 L-methionine + 2 oxidized [2Fe-2S]-[ferredoxin]. It functions in the pathway cofactor biosynthesis; biotin biosynthesis; biotin from 7,8-diaminononanoate: step 2/2. In terms of biological role, catalyzes the conversion of dethiobiotin (DTB) to biotin by the insertion of a sulfur atom into dethiobiotin via a radical-based mechanism. This is Biotin synthase from Helicobacter pylori (strain Shi470).